A 130-amino-acid polypeptide reads, in one-letter code: Capsid protein (130 aa).

The viral RNA-binding stretch occupies residues 32 to 105 (EWISSNSRSQ…FATNSDCELI (74 aa)).

This sequence belongs to the Leviviricetes capsid protein family. As to quaternary structure, homodimer. The capsid proteins form dimers that assemble by group of 5. Twelve such pentamers are linked together with free dimers. The homodimers binds to the viral RNA via an operator hairpin, but also to many other RNA sequences in the viral genome; this interaction probably shifts the virus from the replicative to the assembly phase and ensures specific encapsidation of the viral genome.

It is found in the virion. In terms of biological role, capsid protein self-assembles to form an icosahedral capsid with a T=3 symmetry, about 26 nm in diameter, and consisting of 89 capsid proteins dimers (178 capsid proteins). Involved in viral genome encapsidation through the interaction between a capsid protein dimer and the multiple packaging signals present in the RNA genome. The capsid also contains 1 copy of the A2 maturation protein. Its function is as follows. Acts as a translational repressor of viral replicase synthesis late in infection. This latter function is the result of capsid protein interaction with an RNA hairpin which contains the replicase ribosome-binding site. In Escherichia coli (Bacteriophage MS2), this protein is Capsid protein.